The chain runs to 294 residues: ATP synthase gamma chain (294 aa).

It belongs to the ATPase gamma chain family. In terms of assembly, F-type ATPases have 2 components, CF(1) - the catalytic core - and CF(0) - the membrane proton channel. CF(1) has five subunits: alpha(3), beta(3), gamma(1), delta(1), epsilon(1). CF(0) has three main subunits: a, b and c.

Its subcellular location is the cell inner membrane. Functionally, produces ATP from ADP in the presence of a proton gradient across the membrane. The gamma chain is believed to be important in regulating ATPase activity and the flow of protons through the CF(0) complex. The protein is ATP synthase gamma chain of Rhizobium rhizogenes (strain K84 / ATCC BAA-868) (Agrobacterium radiobacter).